The chain runs to 856 residues: Glucans biosynthesis glucosyltransferase H (856 aa).

6 consecutive transmembrane segments (helical) span residues 144 to 164 (ILLV…KGIM), 198 to 218 (ILIL…TALM), 517 to 537 (VFLT…FLVL), 574 to 594 (LFST…ILIW), 608 to 628 (TLSM…RMIF), and 684 to 704 (FLWW…VSVI).

Belongs to the glycosyltransferase 2 family. OpgH subfamily.

The protein localises to the cell inner membrane. It functions in the pathway glycan metabolism; osmoregulated periplasmic glucan (OPG) biosynthesis. Involved in the biosynthesis of osmoregulated periplasmic glucans (OPGs). This is Glucans biosynthesis glucosyltransferase H from Pseudomonas fluorescens (strain ATCC BAA-477 / NRRL B-23932 / Pf-5).